The sequence spans 196 residues: Protein GrpE (196 aa).

Over residues 1–26 (MQEPHNQEPIEEQKLSEMEDTLEKQH) the composition is skewed to basic and acidic residues. The interval 1–40 (MQEPHNQEPIEEQKLSEMEDTLEKQHSGASTENTERAEEG) is disordered.

The protein belongs to the GrpE family. Homodimer.

The protein localises to the cytoplasm. Its function is as follows. Participates actively in the response to hyperosmotic and heat shock by preventing the aggregation of stress-denatured proteins, in association with DnaK and GrpE. It is the nucleotide exchange factor for DnaK and may function as a thermosensor. Unfolded proteins bind initially to DnaJ; upon interaction with the DnaJ-bound protein, DnaK hydrolyzes its bound ATP, resulting in the formation of a stable complex. GrpE releases ADP from DnaK; ATP binding to DnaK triggers the release of the substrate protein, thus completing the reaction cycle. Several rounds of ATP-dependent interactions between DnaJ, DnaK and GrpE are required for fully efficient folding. This is Protein GrpE from Nitrosomonas eutropha (strain DSM 101675 / C91 / Nm57).